The chain runs to 220 residues: Glutathione S-transferase (220 aa).

Residues 1-77 (MLKLHGFSVS…YIEQTQSGKA (77 aa)) form the GST N-terminal domain. Glutathione is bound by residues tyrosine 12, valine 49, and 61 to 62 (ET). The region spanning 82–211 (DPFEQAKVRE…ADKEASMPAF (130 aa)) is the GST C-terminal domain.

The protein belongs to the GST superfamily. Monomer and homodimer.

The protein resides in the cytoplasm. The catalysed reaction is RX + glutathione = an S-substituted glutathione + a halide anion + H(+). Its function is as follows. Conjugation of reduced glutathione to a wide number of exogenous and endogenous hydrophobic electrophiles. In Pseudomonas putida (strain ATCC 700007 / DSM 6899 / JCM 31910 / BCRC 17059 / LMG 24140 / F1), this protein is Glutathione S-transferase.